Consider the following 175-residue polypeptide: Endoribonuclease YbeY (175 aa).

Zn(2+) is bound by residues His129, His133, and His139.

This sequence belongs to the endoribonuclease YbeY family. Zn(2+) is required as a cofactor.

It is found in the cytoplasm. Functionally, single strand-specific metallo-endoribonuclease involved in late-stage 70S ribosome quality control and in maturation of the 3' terminus of the 16S rRNA. The polypeptide is Endoribonuclease YbeY (Lactobacillus johnsonii (strain CNCM I-12250 / La1 / NCC 533)).